Reading from the N-terminus, the 242-residue chain is Small ribosomal subunit protein uS2 (242 aa).

This sequence belongs to the universal ribosomal protein uS2 family.

The protein is Small ribosomal subunit protein uS2 of Shewanella oneidensis (strain ATCC 700550 / JCM 31522 / CIP 106686 / LMG 19005 / NCIMB 14063 / MR-1).